We begin with the raw amino-acid sequence, 263 residues long: Cytochrome c oxidase subunit 3 (263 aa).

7 consecutive transmembrane segments (helical) span residues 9–29, 40–60, 84–104, 129–149, 161–181, 198–218, and 241–261; these read PFHM…AMIL, FNMN…IQWW, GMIL…WAFF, IQIP…ITWA, ALQG…LQMY, TFFV…TFLL, and AWYW…IYWW.

Belongs to the cytochrome c oxidase subunit 3 family. In terms of assembly, component of the cytochrome c oxidase (complex IV, CIV), a multisubunit enzyme composed of a catalytic core of 3 subunits and several supernumerary subunits. The complex exists as a monomer or a dimer and forms supercomplexes (SCs) in the inner mitochondrial membrane with ubiquinol-cytochrome c oxidoreductase (cytochrome b-c1 complex, complex III, CIII).

It is found in the mitochondrion inner membrane. It catalyses the reaction 4 Fe(II)-[cytochrome c] + O2 + 8 H(+)(in) = 4 Fe(III)-[cytochrome c] + 2 H2O + 4 H(+)(out). Its function is as follows. Component of the cytochrome c oxidase, the last enzyme in the mitochondrial electron transport chain which drives oxidative phosphorylation. The respiratory chain contains 3 multisubunit complexes succinate dehydrogenase (complex II, CII), ubiquinol-cytochrome c oxidoreductase (cytochrome b-c1 complex, complex III, CIII) and cytochrome c oxidase (complex IV, CIV), that cooperate to transfer electrons derived from NADH and succinate to molecular oxygen, creating an electrochemical gradient over the inner membrane that drives transmembrane transport and the ATP synthase. Cytochrome c oxidase is the component of the respiratory chain that catalyzes the reduction of oxygen to water. Electrons originating from reduced cytochrome c in the intermembrane space (IMS) are transferred via the dinuclear copper A center (CU(A)) of subunit 2 and heme A of subunit 1 to the active site in subunit 1, a binuclear center (BNC) formed by heme A3 and copper B (CU(B)). The BNC reduces molecular oxygen to 2 water molecules using 4 electrons from cytochrome c in the IMS and 4 protons from the mitochondrial matrix. The sequence is that of Cytochrome c oxidase subunit 3 (COIII) from Locusta migratoria (Migratory locust).